A 221-amino-acid chain; its full sequence is ATP-dependent dethiobiotin synthetase BioD (221 aa).

Position 11 to 16 (11 to 16) interacts with ATP; it reads DVGKTF. Thr15 is a binding site for Mg(2+). Lys35 is an active-site residue. A substrate-binding site is contributed by Thr39. Residues Asp44 and 103-106 each bind ATP; that span reads EGAG. Mg(2+) is bound by residues Asp44 and Glu103.

It belongs to the dethiobiotin synthetase family. In terms of assembly, homodimer. The cofactor is Mg(2+).

The protein resides in the cytoplasm. It catalyses the reaction (7R,8S)-7,8-diammoniononanoate + CO2 + ATP = (4R,5S)-dethiobiotin + ADP + phosphate + 3 H(+). Its pathway is cofactor biosynthesis; biotin biosynthesis; biotin from 7,8-diaminononanoate: step 1/2. Catalyzes a mechanistically unusual reaction, the ATP-dependent insertion of CO2 between the N7 and N8 nitrogen atoms of 7,8-diaminopelargonic acid (DAPA, also called 7,8-diammoniononanoate) to form a ureido ring. The chain is ATP-dependent dethiobiotin synthetase BioD from Leptospira interrogans serogroup Icterohaemorrhagiae serovar copenhageni (strain Fiocruz L1-130).